We begin with the raw amino-acid sequence, 316 residues long: 4-hydroxy-3-methylbut-2-enyl diphosphate reductase (316 aa).

Cys17 is a binding site for [4Fe-4S] cluster. 2 residues coordinate (2E)-4-hydroxy-3-methylbut-2-enyl diphosphate: His46 and His79. Residues His46 and His79 each contribute to the dimethylallyl diphosphate site. His46 and His79 together coordinate isopentenyl diphosphate. Cys101 is a [4Fe-4S] cluster binding site. His129 contributes to the (2E)-4-hydroxy-3-methylbut-2-enyl diphosphate binding site. His129 is a dimethylallyl diphosphate binding site. His129 provides a ligand contact to isopentenyl diphosphate. The active-site Proton donor is the Glu131. Residue Thr170 participates in (2E)-4-hydroxy-3-methylbut-2-enyl diphosphate binding. [4Fe-4S] cluster is bound at residue Cys200. 4 residues coordinate (2E)-4-hydroxy-3-methylbut-2-enyl diphosphate: Ser228, Ser229, Asn230, and Ser273. Residues Ser228, Ser229, Asn230, and Ser273 each contribute to the dimethylallyl diphosphate site. The isopentenyl diphosphate site is built by Ser228, Ser229, Asn230, and Ser273.

This sequence belongs to the IspH family. The cofactor is [4Fe-4S] cluster.

It carries out the reaction isopentenyl diphosphate + 2 oxidized [2Fe-2S]-[ferredoxin] + H2O = (2E)-4-hydroxy-3-methylbut-2-enyl diphosphate + 2 reduced [2Fe-2S]-[ferredoxin] + 2 H(+). The catalysed reaction is dimethylallyl diphosphate + 2 oxidized [2Fe-2S]-[ferredoxin] + H2O = (2E)-4-hydroxy-3-methylbut-2-enyl diphosphate + 2 reduced [2Fe-2S]-[ferredoxin] + 2 H(+). It functions in the pathway isoprenoid biosynthesis; dimethylallyl diphosphate biosynthesis; dimethylallyl diphosphate from (2E)-4-hydroxy-3-methylbutenyl diphosphate: step 1/1. Its pathway is isoprenoid biosynthesis; isopentenyl diphosphate biosynthesis via DXP pathway; isopentenyl diphosphate from 1-deoxy-D-xylulose 5-phosphate: step 6/6. Catalyzes the conversion of 1-hydroxy-2-methyl-2-(E)-butenyl 4-diphosphate (HMBPP) into a mixture of isopentenyl diphosphate (IPP) and dimethylallyl diphosphate (DMAPP). Acts in the terminal step of the DOXP/MEP pathway for isoprenoid precursor biosynthesis. The polypeptide is 4-hydroxy-3-methylbut-2-enyl diphosphate reductase (Ruegeria pomeroyi (strain ATCC 700808 / DSM 15171 / DSS-3) (Silicibacter pomeroyi)).